The sequence spans 382 residues: Mannitol-1-phosphate 5-dehydrogenase (382 aa).

4–15 (AVHFGAGNIGRG) serves as a coordination point for NAD(+).

The protein belongs to the mannitol dehydrogenase family.

The catalysed reaction is D-mannitol 1-phosphate + NAD(+) = beta-D-fructose 6-phosphate + NADH + H(+). The chain is Mannitol-1-phosphate 5-dehydrogenase from Vibrio campbellii (strain ATCC BAA-1116).